Here is a 448-residue protein sequence, read N- to C-terminus: ATP-dependent protease ATPase subunit HslU (448 aa).

Residues Val21, 63 to 68, Asp261, Glu326, and Arg398 contribute to the ATP site; that span reads GVGKTE.

This sequence belongs to the ClpX chaperone family. HslU subfamily. In terms of assembly, a double ring-shaped homohexamer of HslV is capped on each side by a ring-shaped HslU homohexamer. The assembly of the HslU/HslV complex is dependent on binding of ATP.

Its subcellular location is the cytoplasm. ATPase subunit of a proteasome-like degradation complex; this subunit has chaperone activity. The binding of ATP and its subsequent hydrolysis by HslU are essential for unfolding of protein substrates subsequently hydrolyzed by HslV. HslU recognizes the N-terminal part of its protein substrates and unfolds these before they are guided to HslV for hydrolysis. This is ATP-dependent protease ATPase subunit HslU from Persephonella marina (strain DSM 14350 / EX-H1).